A 215-amino-acid polypeptide reads, in one-letter code: Cytochrome b6 (215 aa).

Residues 32–52 (IFYCLGGITLTCFLVQVATGF) traverse the membrane as a helical segment. Cys35 contacts heme c. His86 and His100 together coordinate heme b. The next 3 helical transmembrane spans lie at 90 to 110 (ASMM…TGGF), 116 to 136 (LTWV…VTGY), and 186 to 206 (LHTF…FPMI). Residues His187 and His202 each contribute to the heme b site.

It belongs to the cytochrome b family. PetB subfamily. In terms of assembly, the 4 large subunits of the cytochrome b6-f complex are cytochrome b6, subunit IV (17 kDa polypeptide, PetD), cytochrome f and the Rieske protein, while the 4 small subunits are PetG, PetL, PetM and PetN. The complex functions as a dimer. Requires heme b as cofactor. Heme c serves as cofactor.

The protein localises to the plastid. Its subcellular location is the chloroplast thylakoid membrane. Component of the cytochrome b6-f complex, which mediates electron transfer between photosystem II (PSII) and photosystem I (PSI), cyclic electron flow around PSI, and state transitions. This chain is Cytochrome b6, found in Lactuca sativa (Garden lettuce).